The chain runs to 102 residues: Putative RNA-binding protein RbpA (102 aa).

The RRM domain maps to 2–79 (SIYVGNLSYE…RDLKVNKAKP (78 aa)). Residues 73–84 (KVNKAKPREDRG) show a composition bias toward basic and acidic residues. The tract at residues 73-102 (KVNKAKPREDRGPSGGNRGGYGGGGGRNRY) is disordered. Positions 85-102 (PSGGNRGGYGGGGGRNRY) are enriched in gly residues.

The sequence is that of Putative RNA-binding protein RbpA (rbpA) from Nostoc sp. (strain PCC 7120 / SAG 25.82 / UTEX 2576).